Here is a 412-residue protein sequence, read N- to C-terminus: Polyferredoxin protein MvhB (412 aa).

12 consecutive 4Fe-4S ferredoxin-type domains span residues 2–29, 30–57, 66–95, 96–127, 138–166, 168–197, 207–236, 237–265, 275–304, 311–344, 356–385, and 386–412; these read IVIN…VKPE, DVIY…HEDI, KKIT…LVND, GKAS…IEGV, DKPI…LPKY, ESIE…ISGK, ENFT…PKSD, LTVS…LEVK, EGIV…VVSP, GLKK…LVEV, NRIQ…LTDD, and EKLP…LLIK. [4Fe-4S] cluster-binding residues include cysteine 9, cysteine 12, cysteine 15, and cysteine 19. [4Fe-4S] cluster is bound by residues cysteine 75, cysteine 78, cysteine 81, cysteine 85, cysteine 107, cysteine 110, cysteine 113, cysteine 117, cysteine 146, cysteine 149, cysteine 152, cysteine 156, cysteine 177, cysteine 180, cysteine 183, cysteine 187, cysteine 216, cysteine 219, cysteine 222, cysteine 226, cysteine 245, cysteine 248, cysteine 251, cysteine 255, cysteine 284, cysteine 287, cysteine 290, cysteine 294, cysteine 324, cysteine 327, cysteine 330, cysteine 334, cysteine 365, cysteine 368, cysteine 371, and cysteine 375.

Requires [4Fe-4S] cluster as cofactor.

In Methanothermus fervidus, this protein is Polyferredoxin protein MvhB (mvhB).